The following is a 420-amino-acid chain: uncharacterized protein (420 aa).

The protein belongs to the Rv1128c/1148c/1588c/1702c/1945/3466 family.

This is an uncharacterized protein from Mycobacterium tuberculosis (strain CDC 1551 / Oshkosh).